We begin with the raw amino-acid sequence, 668 residues long: MAP kinase kinase PBS2 (668 aa).

The segment covering 1–15 (MEDKFANLSLHEKTG) has biased composition (basic and acidic residues). 3 disordered regions span residues 1–43 (MEDK…SSHY), 61–120 (RALK…ASSK), and 181–313 (NPNR…GSSG). 3 stretches are compositionally biased toward polar residues: residues 16–43 (KSSI…SSHY), 68–91 (SVGS…QQIV), and 104–120 (SKVS…ASSK). Phosphoserine is present on serine 68. Over residues 239–250 (AQQPQQFAPSPS) the composition is skewed to low complexity. A Phosphoserine modification is found at serine 269. Polar residues predominate over residues 270–300 (NPGSLINGVQSTSTSSSTEGPHDTVGTTPRT). Residues 301-310 (GNSNNSSNSG) show a composition bias toward low complexity. A Protein kinase domain is found at 360 to 623 (LEFLDELGHG…YAALTEHPWL (264 aa)). Residues 366-374 (LGHGNYGNV) and lysine 389 each bind ATP. Aspartate 485 serves as the catalytic Proton acceptor. At serine 514 the chain carries Phosphoserine. Threonine 518 carries the phosphothreonine modification.

It belongs to the protein kinase superfamily. STE Ser/Thr protein kinase family. MAP kinase kinase subfamily. As to quaternary structure, interacts with NBP2, PTC1, SHO1 and STE11. Post-translationally, activated by phosphorylation by SSK2 or SSK22. Ser/Thr phosphorylation is also necessary for SHO1-mediated activation.

The protein localises to the cytoplasm. The enzyme catalyses L-seryl-[protein] + ATP = O-phospho-L-seryl-[protein] + ADP + H(+). The catalysed reaction is L-threonyl-[protein] + ATP = O-phospho-L-threonyl-[protein] + ADP + H(+). It catalyses the reaction L-tyrosyl-[protein] + ATP = O-phospho-L-tyrosyl-[protein] + ADP + H(+). Kinase involved in a signal transduction pathway that is activated by changes in the osmolarity of the extracellular environment. Activates the MAP kinase HOG1 by concomitant phosphorylation at 'Thr-174' and 'Tyr-176'. This chain is MAP kinase kinase PBS2 (PBS2), found in Saccharomyces cerevisiae (strain ATCC 204508 / S288c) (Baker's yeast).